Reading from the N-terminus, the 505-residue chain is Activin receptor type-1B (505 aa).

Positions 1–23 are cleaved as a signal peptide; that stretch reads MAESAGASSFFPLVVLLLAGSGG. The Extracellular segment spans residues 24–126; that stretch reads SGPRGVQALL…EHPSMWGPVE (103 aa). Asn-43 carries an N-linked (GlcNAc...) asparagine glycan. The chain crosses the membrane as a helical span at residues 127 to 149; the sequence is LVGIIAGPVFLLFLIIIIVFLVI. Residues 150 to 505 lie on the Cytoplasmic side of the membrane; the sequence is NYHQRVYHNR…QLSVQEDVKI (356 aa). The GS domain maps to 177 to 206; that stretch reads KTLQDLVYDLSTSGSGSGLPLFVQRTVART. The Protein kinase domain maps to 207–497; that stretch reads IVLQEIIGKG…LRIKKTLSQL (291 aa). Residues 213–221 and Lys-234 each bind ATP; that span reads IGKGRFGEV. Asp-335 acts as the Proton acceptor in catalysis. Tyr-380 is subject to Phosphotyrosine.

This sequence belongs to the protein kinase superfamily. TKL Ser/Thr protein kinase family. TGFB receptor subfamily. As to quaternary structure, forms an activin receptor complex with activin receptor type-2 (ACVR2A or ACVR2B). Part of a complex consisting of MAGI2/ARIP1, ACVR2A, ACVR1B and SMAD3. Interacts with SMAD2 and SMAD3. Interacts with SMAD7. Interacts with FKBP1A. Interacts with IGSF1. Interacts with CRIPTO. Interacts with TDP2. Interacts with TSC22D1/TSC-22. Requires Mg(2+) as cofactor. Mn(2+) is required as a cofactor. Post-translationally, autophosphorylated. Phosphorylated by activin receptor type-2 (ACVR2A or ACVR2B) in response to activin-binding at serine and threonine residues in the GS domain. Phosphorylation of ACVR1B by activin receptor type-2 regulates association with SMAD7. In terms of processing, ubiquitinated. Level of ubiquitination is regulated by the SMAD7-SMURF1 complex. Ubiquitinated. Expressed in many tissues, most strongly in kidney, pancreas, brain, lung, and liver.

It is found in the cell membrane. The catalysed reaction is L-threonyl-[receptor-protein] + ATP = O-phospho-L-threonyl-[receptor-protein] + ADP + H(+). The enzyme catalyses L-seryl-[receptor-protein] + ATP = O-phospho-L-seryl-[receptor-protein] + ADP + H(+). Its activity is regulated as follows. Activin receptor type-2 (ACVR2A or ACVR2B) activates the type-1 receptor through phosphorylation of its regulatory GS domain. Transmembrane serine/threonine kinase activin type-1 receptor forming an activin receptor complex with activin receptor type-2 (ACVR2A or ACVR2B). Transduces the activin signal from the cell surface to the cytoplasm and is thus regulating a many physiological and pathological processes including neuronal differentiation and neuronal survival, hair follicle development and cycling, FSH production by the pituitary gland, wound healing, extracellular matrix production, immunosuppression and carcinogenesis. Activin is also thought to have a paracrine or autocrine role in follicular development in the ovary. Within the receptor complex, type-2 receptors (ACVR2A and/or ACVR2B) act as a primary activin receptors whereas the type-1 receptors like ACVR1B act as downstream transducers of activin signals. Activin binds to type-2 receptor at the plasma membrane and activates its serine-threonine kinase. The activated receptor type-2 then phosphorylates and activates the type-1 receptor such as ACVR1B. Once activated, the type-1 receptor binds and phosphorylates the SMAD proteins SMAD2 and SMAD3, on serine residues of the C-terminal tail. Soon after their association with the activin receptor and subsequent phosphorylation, SMAD2 and SMAD3 are released into the cytoplasm where they interact with the common partner SMAD4. This SMAD complex translocates into the nucleus where it mediates activin-induced transcription. Inhibitory SMAD7, which is recruited to ACVR1B through FKBP1A, can prevent the association of SMAD2 and SMAD3 with the activin receptor complex, thereby blocking the activin signal. Activin signal transduction is also antagonized by the binding to the receptor of inhibin-B via the IGSF1 inhibin coreceptor. ACVR1B also phosphorylates TDP2. This chain is Activin receptor type-1B (ACVR1B), found in Homo sapiens (Human).